A 1501-amino-acid chain; its full sequence is 1-phosphatidylinositol 4,5-bisphosphate phosphodiesterase eta-2 (1501 aa).

The interval 28-47 is disordered; that stretch reads RGFSGLQGGRRRGRGEKGIP. The interval 75–229 is necessary for plasma membrane localization; the sequence is MPGPQPSAAS…WVTGLRYLMA (155 aa). One can recognise a PH domain in the interval 121 to 229; that stretch reads SAMQEGTQMV…WVTGLRYLMA (109 aa). EF-hand domains are found at residues 243 to 278 and 279 to 315; these read TRDQ…LNVN and LPRQ…MSTR. Aspartate 256, asparagine 258, aspartate 260, serine 262, and glutamate 267 together coordinate Ca(2+). In terms of domain architecture, PI-PLC X-box spans 400–545; that stretch reads QDMTQPLSHY…LKGKILVKGK (146 aa). The active site involves histidine 415. Residues asparagine 416, glutamate 445, and aspartate 447 each coordinate Ca(2+). Residue histidine 459 is part of the active site. A Ca(2+)-binding site is contributed by glutamate 494. Substrate contacts are provided by lysine 543 and lysine 545. Disordered stretches follow at residues 551–570 and 609–700; these read ISED…DEME and DPND…QKKT. The span at 553-570 shows a compositional bias: acidic residues; that stretch reads EDAEEGEVSDEDSADEME. A phosphoserine mark is found at serine 561 and serine 565. Basic and acidic residues predominate over residues 626–638; that stretch reads RKAEAKKGQSKVE. Residues 662 to 673 show a composition bias toward basic residues; sequence SKRKKKGSKIKK. Residues serine 676 and serine 686 each carry the phosphoserine modification. The 115-residue stretch at 707 to 821 folds into the PI-PLC Y-box domain; the sequence is LSDLVKYTKS…GYVLKPQCMC (115 aa). Residues serine 734 and arginine 761 each contribute to the substrate site. In terms of domain architecture, C2 spans 821-950; the sequence is CQGVFNPNSE…PGYRHVYLEG (130 aa). Positions 865, 867, 891, 920, 921, and 922 each coordinate Ca(2+). Disordered regions lie at residues 986 to 1073, 1089 to 1238, 1273 to 1305, and 1398 to 1469; these read GSLD…RLFP, EEPA…SSND, SAAR…DELQ, and GDIT…GACS. Residues 1089 to 1107 show a composition bias toward low complexity; the sequence is EEPALGPGLPLQAAAPTGP. Composition is skewed to basic and acidic residues over residues 1142-1151 and 1215-1227; these read GGRENEEPPL and LWQR…HRDS. Residues 1421–1439 are compositionally biased toward low complexity; it reads RRSSSRSQSRVRAIASRAR. Residues 1440–1463 show a composition bias toward basic and acidic residues; that stretch reads QAQERQQRLRGQDSRGPPEEERGT.

It depends on Ca(2+) as a cofactor. Specifically detected in the brain, with higher level in cerebral cortex, olfactory bulb and hippocampus (at protein level). Expressed in the pyramidal cells of the hippocampus, but also in eye and lung.

The protein localises to the cytoplasm. Its subcellular location is the cell membrane. The catalysed reaction is a 1,2-diacyl-sn-glycero-3-phospho-(1D-myo-inositol-4,5-bisphosphate) + H2O = 1D-myo-inositol 1,4,5-trisphosphate + a 1,2-diacyl-sn-glycerol + H(+). Its activity is regulated as follows. Activity is stimulated by GNB1:GNG2. Functionally, the production of the second messenger molecules diacylglycerol (DAG) and inositol 1,4,5-trisphosphate (IP3) is mediated by activated phosphatidylinositol-specific phospholipase C enzymes. This phospholipase activity is very sensitive to calcium. May be important for formation and maintenance of the neuronal network in the postnatal brain. The sequence is that of 1-phosphatidylinositol 4,5-bisphosphate phosphodiesterase eta-2 from Mus musculus (Mouse).